Reading from the N-terminus, the 58-residue chain is Small ribosomal subunit protein bS21 (58 aa).

Belongs to the bacterial ribosomal protein bS21 family.

The chain is Small ribosomal subunit protein bS21 from Synechococcus sp. (strain CC9605).